The following is a 507-amino-acid chain: ATP synthase subunit alpha, chloroplastic (507 aa).

170–177 (GDRQTGKT) is an ATP binding site. The residue at position 257 (T257) is a Phosphothreonine.

Belongs to the ATPase alpha/beta chains family. F-type ATPases have 2 components, CF(1) - the catalytic core - and CF(0) - the membrane proton channel. CF(1) has five subunits: alpha(3), beta(3), gamma(1), delta(1), epsilon(1). CF(0) has four main subunits: a, b, b' and c.

It is found in the plastid. It localises to the chloroplast thylakoid membrane. It carries out the reaction ATP + H2O + 4 H(+)(in) = ADP + phosphate + 5 H(+)(out). Its function is as follows. Produces ATP from ADP in the presence of a proton gradient across the membrane. The alpha chain is a regulatory subunit. The protein is ATP synthase subunit alpha, chloroplastic of Draba nemorosa (Woodland whitlowgrass).